We begin with the raw amino-acid sequence, 344 residues long: tRNA-specific 2-thiouridylase MnmA (344 aa).

ATP-binding positions include 9–16 (AMSGGVDS) and Met34. The active-site Nucleophile is the Cys92. Cysteines 92 and 188 form a disulfide. Gly116 contacts ATP. The tract at residues 138-140 (KDQ) is interaction with tRNA. The Cysteine persulfide intermediate role is filled by Cys188.

The protein belongs to the MnmA/TRMU family.

It localises to the cytoplasm. It catalyses the reaction S-sulfanyl-L-cysteinyl-[protein] + uridine(34) in tRNA + AH2 + ATP = 2-thiouridine(34) in tRNA + L-cysteinyl-[protein] + A + AMP + diphosphate + H(+). In terms of biological role, catalyzes the 2-thiolation of uridine at the wobble position (U34) of tRNA, leading to the formation of s(2)U34. In Desulfotalea psychrophila (strain LSv54 / DSM 12343), this protein is tRNA-specific 2-thiouridylase MnmA.